The primary structure comprises 557 residues: Membrane protein insertase YidC (557 aa).

Transmembrane regions (helical) follow at residues T6–H26, I219–D239, I367–F387, L437–L457, and M514–V534.

It belongs to the OXA1/ALB3/YidC family. Type 1 subfamily. As to quaternary structure, interacts with the Sec translocase complex via SecD. Specifically interacts with transmembrane segments of nascent integral membrane proteins during membrane integration.

The protein resides in the cell inner membrane. In terms of biological role, required for the insertion and/or proper folding and/or complex formation of integral membrane proteins into the membrane. Involved in integration of membrane proteins that insert both dependently and independently of the Sec translocase complex, as well as at least some lipoproteins. Aids folding of multispanning membrane proteins. This is Membrane protein insertase YidC from Polynucleobacter asymbioticus (strain DSM 18221 / CIP 109841 / QLW-P1DMWA-1) (Polynucleobacter necessarius subsp. asymbioticus).